A 213-amino-acid chain; its full sequence is Thiopurine S-methyltransferase (213 aa).

4 residues coordinate S-adenosyl-L-methionine: Trp-10, Met-45, Glu-66, and Arg-120.

Belongs to the class I-like SAM-binding methyltransferase superfamily. TPMT family.

It is found in the cytoplasm. The enzyme catalyses S-adenosyl-L-methionine + a thiopurine = S-adenosyl-L-homocysteine + a thiopurine S-methylether.. The protein is Thiopurine S-methyltransferase of Photobacterium profundum (strain SS9).